We begin with the raw amino-acid sequence, 215 residues long: 3-isopropylmalate dehydratase small subunit (215 aa).

Belongs to the LeuD family. LeuD type 1 subfamily. Heterodimer of LeuC and LeuD.

The enzyme catalyses (2R,3S)-3-isopropylmalate = (2S)-2-isopropylmalate. It functions in the pathway amino-acid biosynthesis; L-leucine biosynthesis; L-leucine from 3-methyl-2-oxobutanoate: step 2/4. Its function is as follows. Catalyzes the isomerization between 2-isopropylmalate and 3-isopropylmalate, via the formation of 2-isopropylmaleate. In Chromohalobacter salexigens (strain ATCC BAA-138 / DSM 3043 / CIP 106854 / NCIMB 13768 / 1H11), this protein is 3-isopropylmalate dehydratase small subunit.